The sequence spans 68 residues: Conotoxin reg3.14 (68 aa).

An N-terminal signal peptide occupies residues 1 to 22 (MMSKLGVLLTICLLLFPLSVLP). A propeptide spanning residues 23-52 (LDGDQPADQPAERMQDISAEQNPWFDPVKR) is cleaved from the precursor. 3 disulfides stabilise this stretch: C53/C68, C54/C64, and C59/C67.

Belongs to the conotoxin M superfamily. As to expression, expressed by the venom duct.

The protein resides in the secreted. The chain is Conotoxin reg3.14 from Conus regius (Crown cone).